A 94-amino-acid chain; its full sequence is Large ribosomal subunit protein eL31 (94 aa).

It belongs to the eukaryotic ribosomal protein eL31 family.

This chain is Large ribosomal subunit protein eL31 (rpl31e), found in Pyrococcus abyssi (strain GE5 / Orsay).